The following is a 106-amino-acid chain: MGGPTRRHQEEGSAECLGGPSTRAAPGPGLRDFHFTTAGPSKADRLGDAAQIHRERMRPVQCGDGSGERVFLQSPGSIGTLYIRLDLNSQRSTCCCLLNAGTKGMC.

The interval 1–44 (MGGPTRRHQEEGSAECLGGPSTRAAPGPGLRDFHFTTAGPSKAD) is disordered. Positions 78–87 (IGTLYIRLDL) match the Nuclear export signal motif. T93 is subject to Phosphothreonine; by PKA.

Interacts with FOXO1 (via N-terminal domain); the interaction is direct, occurs in a forskolin-independent manner that prevents SIRT1 binding to FOXO1. Interacts with FOXO3. Does not interact with FOXO4. Post-translationally, phosphorylated at Thr-93 by PKA, leading to import into the nucleus. As to expression, expressed in adipocytes. Expressed in brown and white adipose tissue but not in liver. Protein levels in brown and white adipose tissues decrease following fasting (at protein level). Expressed in white and brown adipose tissues. Expressed in adipocytes. Not expressed in liver, skeletal muscle and brain.

Its subcellular location is the cytoplasm. The protein localises to the cytosol. It localises to the nucleus. Functionally, regulator of adipocytes that acts by repressing FOXO1 transcriptional activity. Acts by promoting acetylation of FOXO1, both by preventing the interaction between FOXO1 and SIRT1 deacetylase, and by mediating acetyltransferase activity in vitro. Regulates insulin sensitivity and energy metabolism. The chain is Foxo1-corepressor (Fcor) from Mus musculus (Mouse).